The sequence spans 56 residues: MAVQQNKKSRSRRDMRRSHDALTTAAVSVDKTTGETHLRHHVTADGYYRGRKVINK.

Positions 1-37 are disordered; the sequence is MAVQQNKKSRSRRDMRRSHDALTTAAVSVDKTTGETH. Residues 7-16 show a composition bias toward basic residues; that stretch reads KKSRSRRDMR.

Belongs to the bacterial ribosomal protein bL32 family.

The chain is Large ribosomal subunit protein bL32 from Haemophilus ducreyi (strain 35000HP / ATCC 700724).